Here is a 475-residue protein sequence, read N- to C-terminus: Aspartyl/glutamyl-tRNA(Asn/Gln) amidotransferase subunit B (475 aa).

It belongs to the GatB/GatE family. GatB subfamily. As to quaternary structure, heterotrimer of A, B and C subunits.

The catalysed reaction is L-glutamyl-tRNA(Gln) + L-glutamine + ATP + H2O = L-glutaminyl-tRNA(Gln) + L-glutamate + ADP + phosphate + H(+). It carries out the reaction L-aspartyl-tRNA(Asn) + L-glutamine + ATP + H2O = L-asparaginyl-tRNA(Asn) + L-glutamate + ADP + phosphate + 2 H(+). Its function is as follows. Allows the formation of correctly charged Asn-tRNA(Asn) or Gln-tRNA(Gln) through the transamidation of misacylated Asp-tRNA(Asn) or Glu-tRNA(Gln) in organisms which lack either or both of asparaginyl-tRNA or glutaminyl-tRNA synthetases. The reaction takes place in the presence of glutamine and ATP through an activated phospho-Asp-tRNA(Asn) or phospho-Glu-tRNA(Gln). The polypeptide is Aspartyl/glutamyl-tRNA(Asn/Gln) amidotransferase subunit B (Mycoplasma mobile (strain ATCC 43663 / 163K / NCTC 11711) (Mesomycoplasma mobile)).